A 367-amino-acid chain; its full sequence is Dual-specificity RNA methyltransferase RlmN (367 aa).

The active-site Proton acceptor is glutamate 91. The Radical SAM core domain occupies glycine 102–aspartate 337. A disulfide bridge links cysteine 109 with cysteine 342. 3 residues coordinate [4Fe-4S] cluster: cysteine 116, cysteine 120, and cysteine 123. S-adenosyl-L-methionine is bound by residues glycine 169 to glutamate 170, serine 201, serine 223 to histidine 225, and asparagine 299. Cysteine 342 (S-methylcysteine intermediate) is an active-site residue.

Belongs to the radical SAM superfamily. RlmN family. [4Fe-4S] cluster is required as a cofactor.

The protein resides in the cytoplasm. The catalysed reaction is adenosine(2503) in 23S rRNA + 2 reduced [2Fe-2S]-[ferredoxin] + 2 S-adenosyl-L-methionine = 2-methyladenosine(2503) in 23S rRNA + 5'-deoxyadenosine + L-methionine + 2 oxidized [2Fe-2S]-[ferredoxin] + S-adenosyl-L-homocysteine. It catalyses the reaction adenosine(37) in tRNA + 2 reduced [2Fe-2S]-[ferredoxin] + 2 S-adenosyl-L-methionine = 2-methyladenosine(37) in tRNA + 5'-deoxyadenosine + L-methionine + 2 oxidized [2Fe-2S]-[ferredoxin] + S-adenosyl-L-homocysteine. Specifically methylates position 2 of adenine 2503 in 23S rRNA and position 2 of adenine 37 in tRNAs. m2A2503 modification seems to play a crucial role in the proofreading step occurring at the peptidyl transferase center and thus would serve to optimize ribosomal fidelity. The polypeptide is Dual-specificity RNA methyltransferase RlmN (Nitratidesulfovibrio vulgaris (strain DSM 19637 / Miyazaki F) (Desulfovibrio vulgaris)).